The primary structure comprises 247 residues: Synaptonemal complex central element protein 1-like (247 aa).

A coiled-coil region spans residues 71–196 (SEELGEAQAL…LQEARETWDS (126 aa)). The disordered stretch occupies residues 189–247 (EARETWDSPGNCGLKTELEELEGQSQRSPEAQNDKGEASQEEQHHLETSEELPRTGTLC). Basic and acidic residues predominate over residues 220–241 (QNDKGEASQEEQHHLETSEELP).

Belongs to the SYCE family. In terms of tissue distribution, isoform 1 is abundantly expressed in testis and weakly in ovary, it is not found in other tissues. Isoform 2 is expressed in testis and poorly in brain, heart, lung and other examined tissues.

Its function is as follows. May be involved in meiosis. Isoform 1 may be involved in meiosis during spermatogenesis while isoform 2 is probably related to a later stage of meiosis, in the development stage of secondary spermatocytes and spermatids. In Mus musculus (Mouse), this protein is Synaptonemal complex central element protein 1-like (Syce1l).